The chain runs to 318 residues: Beta-ketoacyl-[acyl-carrier-protein] synthase III (318 aa).

Active-site residues include Cys-112 and His-245. Residues 246-250 (QANIR) form an ACP-binding region. The active site involves Asn-275.

It belongs to the thiolase-like superfamily. FabH family. Homodimer.

The protein resides in the cytoplasm. It catalyses the reaction malonyl-[ACP] + acetyl-CoA + H(+) = 3-oxobutanoyl-[ACP] + CO2 + CoA. It functions in the pathway lipid metabolism; fatty acid biosynthesis. Functionally, catalyzes the condensation reaction of fatty acid synthesis by the addition to an acyl acceptor of two carbons from malonyl-ACP. Catalyzes the first condensation reaction which initiates fatty acid synthesis and may therefore play a role in governing the total rate of fatty acid production. Possesses both acetoacetyl-ACP synthase and acetyl transacylase activities. Its substrate specificity determines the biosynthesis of branched-chain and/or straight-chain of fatty acids. The polypeptide is Beta-ketoacyl-[acyl-carrier-protein] synthase III (Nitrosomonas europaea (strain ATCC 19718 / CIP 103999 / KCTC 2705 / NBRC 14298)).